The primary structure comprises 60 residues: Anionic antimicrobial peptide 2 (60 aa).

In terms of tissue distribution, hemolymph.

The protein localises to the secreted. In terms of biological role, antimicrobial protein. Has antibacterial activity against the Gram-positive bacteria M.luteus (MIC=86.6 uM), L.monocytogenes (MIC=86.6 uM), and S.lutea (MIC=86.6 uM). Lacks antibacterial activity against the Gram-positive bacteria B.circulans and S.aureus, and the Gram-negative bacteria E.coli D31, E.coli ATCC 25922, and S.typhimurium. Has antifungal activity against P.pastoris (MIC=86.6 uM) and P.stipitis (MIC=90.9 uM), but lacks antifungal activity against A.niger, C.albicans, C.albidus, C.fructus, C.wickerhamii, F.oxysporum, S.cerevisiae, S.pombe, T.harzianum, and Z.marxianus. The chain is Anionic antimicrobial peptide 2 from Galleria mellonella (Greater wax moth).